Here is a 101-residue protein sequence, read N- to C-terminus: Urease subunit beta (101 aa).

It belongs to the urease beta subunit family. Heterotrimer of UreA (gamma), UreB (beta) and UreC (alpha) subunits. Three heterotrimers associate to form the active enzyme.

Its subcellular location is the cytoplasm. The enzyme catalyses urea + 2 H2O + H(+) = hydrogencarbonate + 2 NH4(+). Its pathway is nitrogen metabolism; urea degradation; CO(2) and NH(3) from urea (urease route): step 1/1. This chain is Urease subunit beta, found in Bradyrhizobium sp. (strain BTAi1 / ATCC BAA-1182).